A 311-amino-acid chain; its full sequence is Pyrimidine-specific ribonucleoside hydrolase RihA (311 aa).

His240 is an active-site residue.

The protein belongs to the IUNH family. RihA subfamily.

Functionally, hydrolyzes cytidine or uridine to ribose and cytosine or uracil, respectively. This chain is Pyrimidine-specific ribonucleoside hydrolase RihA, found in Salmonella paratyphi A (strain ATCC 9150 / SARB42).